Reading from the N-terminus, the 103-residue chain is Large ribosomal subunit protein bL21 (103 aa).

It belongs to the bacterial ribosomal protein bL21 family. Part of the 50S ribosomal subunit. Contacts protein L20.

Functionally, this protein binds to 23S rRNA in the presence of protein L20. The sequence is that of Large ribosomal subunit protein bL21 from Methylibium petroleiphilum (strain ATCC BAA-1232 / LMG 22953 / PM1).